A 294-amino-acid polypeptide reads, in one-letter code: Kynurenine formamidase (294 aa).

The segment covering 1–14 (MSRWKDMNKDELER) has biased composition (basic and acidic residues). A disordered region spans residues 1–20 (MSRWKDMNKDELERQFSPSQ). An HGGXW motif is present at residues 84–88 (HGGYW). Serine 153 serves as the catalytic Nucleophile. Active-site residues include aspartate 236 and histidine 269.

The protein belongs to the kynurenine formamidase family. As to quaternary structure, homodimer.

It localises to the cytoplasm. It is found in the cytosol. Its subcellular location is the nucleus. The enzyme catalyses N-formyl-L-kynurenine + H2O = L-kynurenine + formate + H(+). The protein operates within amino-acid degradation; L-tryptophan degradation via kynurenine pathway; L-kynurenine from L-tryptophan: step 2/2. Functionally, catalyzes the hydrolysis of N-formyl-L-kynurenine to L-kynurenine, the second step in the kynurenine pathway of tryptophan degradation. Kynurenine may be further oxidized to nicotinic acid, NAD(H) and NADP(H). Required for elimination of toxic metabolites. This Salmo salar (Atlantic salmon) protein is Kynurenine formamidase (afmid).